The chain runs to 636 residues: Iron transport multicopper oxidase FET3 (636 aa).

An N-terminal signal peptide occupies residues 1 to 21 (MTNALLSIAVLLFSMLSLAQA). The Extracellular portion of the chain corresponds to 22-559 (ETHTFNWTTG…AFIPTGFTKK (538 aa)). N-linked (GlcNAc...) asparagine glycans are attached at residues N27, N74, and N77. Plastocyanin-like domains are found at residues 32-146 (WDYR…IKDD) and 157-301 (SLSL…VYNK). Cu cation contacts are provided by H81 and H83. N88 and N113 each carry an N-linked (GlcNAc...) asparagine glycan. Cu cation is bound by residues H126 and H128. N-linked (GlcNAc...) asparagine glycosylation is found at N194, N198, N244, N265, N292, N300, N359, and N381. The region spanning 362–502 (YTAPKVPTLM…GLGLVLVEDP (141 aa)) is the Plastocyanin-like 3 domain. Positions 413, 416, 418, 483, 484, 485, and 489 each coordinate Cu cation. The chain crosses the membrane as a helical span at residues 560–584 (GIIAMTFSCFAGILGIITIAIYGMM). The Cytoplasmic segment spans residues 585–636 (DMEDATEKVIRDLHVDPEVLLNEVDENEERQVNEDRHSTEKHQFLTKAKRFF).

This sequence belongs to the multicopper oxidase family. Requires Cu cation as cofactor.

It is found in the cell membrane. The enzyme catalyses 4 Fe(2+) + O2 + 4 H(+) = 4 Fe(3+) + 2 H2O. It catalyses the reaction 4 Cu(+) + O2 + 4 H(+) = 4 Cu(2+) + 2 H2O. Iron transport multicopper ferroxidase required for Fe(2+) ion high affinity uptake. Required to oxidize Fe(2+) to Fe(3+), which is then transported into the cell via the ferric iron permease FTR1. Essential component of copper-dependent iron transport. Also has cuprous oxidase activity. The polypeptide is Iron transport multicopper oxidase FET3 (FET3) (Saccharomyces cerevisiae (strain ATCC 204508 / S288c) (Baker's yeast)).